The sequence spans 353 residues: MYKIVSIPGDGIGPEVVAGALAVIRQITKKHGFEIQVEEHPFGGASYDLHGSMLTDETLNACRDCDAVLLGAVGGPKWENLPHEHKPEAALLKIRRELGLFANLRPAKVYDALVDASSLKADVVRGTDFMVFRELTGGIYFGEPRGFDEKRGWNTMVYEKHEVERIARLAFEAAQKRGSKRVMSIDKANVLEVSQFWRNEVHRVHRDFPDVELSDMYVDNAAMQIVRNPKQFDVIVTGNLFGDILSDIAGMITGSLGMLPSASIGRVHALYEPIHGSAPDIAGKNIANPIATIASVAMMFEHSFCMADISNEIHAAIEGALSEGLRTADIAAPGQKSVSTTEMTEGIIRHLGA.

75–88 contacts NAD(+); the sequence is GPKWENLPHEHKPE. Residues Arg95, Arg105, Arg133, and Asp219 each contribute to the substrate site. Mg(2+) is bound by residues Asp219, Asp243, and Asp247. 276-288 contributes to the NAD(+) binding site; it reads GSAPDIAGKNIAN.

The protein belongs to the isocitrate and isopropylmalate dehydrogenases family. LeuB type 1 subfamily. Homodimer. Mg(2+) is required as a cofactor. Requires Mn(2+) as cofactor.

The protein localises to the cytoplasm. It catalyses the reaction (2R,3S)-3-isopropylmalate + NAD(+) = 4-methyl-2-oxopentanoate + CO2 + NADH. Its pathway is amino-acid biosynthesis; L-leucine biosynthesis; L-leucine from 3-methyl-2-oxobutanoate: step 3/4. Functionally, catalyzes the oxidation of 3-carboxy-2-hydroxy-4-methylpentanoate (3-isopropylmalate) to 3-carboxy-4-methyl-2-oxopentanoate. The product decarboxylates to 4-methyl-2 oxopentanoate. This chain is 3-isopropylmalate dehydrogenase, found in Chlorobium luteolum (strain DSM 273 / BCRC 81028 / 2530) (Pelodictyon luteolum).